Consider the following 277-residue polypeptide: Uridine phosphorylase (277 aa).

Belongs to the PNP/UDP phosphorylase family.

It localises to the cytoplasm. The catalysed reaction is uridine + phosphate = alpha-D-ribose 1-phosphate + uracil. It participates in pyrimidine metabolism; UMP biosynthesis via salvage pathway; uracil from uridine (phosphorylase route): step 1/1. Catalyzes the reversible phosphorylytic cleavage of uridine to uracil and ribose-1-phosphate. The sequence is that of Uridine phosphorylase from Thermococcus kodakarensis (strain ATCC BAA-918 / JCM 12380 / KOD1) (Pyrococcus kodakaraensis (strain KOD1)).